The primary structure comprises 857 residues: DNA gyrase subunit A (857 aa).

A Topo IIA-type catalytic domain is found at 39 to 507 (LPDVRDGLKP…YEGDMSIEDL (469 aa)). Residue Tyr-127 is the O-(5'-phospho-DNA)-tyrosine intermediate of the active site. A GyrA-box motif is present at residues 534-540 (QKRGGKG). The tract at residues 825-857 (REAEEVDGDVAVDETAEGAATTGTDEGEAPSAE) is disordered. A compositionally biased stretch (acidic residues) spans 828–840 (EEVDGDVAVDETA).

The protein belongs to the type II topoisomerase GyrA/ParC subunit family. In terms of assembly, heterotetramer, composed of two GyrA and two GyrB chains. In the heterotetramer, GyrA contains the active site tyrosine that forms a transient covalent intermediate with DNA, while GyrB binds cofactors and catalyzes ATP hydrolysis.

The protein localises to the cytoplasm. It carries out the reaction ATP-dependent breakage, passage and rejoining of double-stranded DNA.. Its function is as follows. A type II topoisomerase that negatively supercoils closed circular double-stranded (ds) DNA in an ATP-dependent manner to modulate DNA topology and maintain chromosomes in an underwound state. Negative supercoiling favors strand separation, and DNA replication, transcription, recombination and repair, all of which involve strand separation. Also able to catalyze the interconversion of other topological isomers of dsDNA rings, including catenanes and knotted rings. Type II topoisomerases break and join 2 DNA strands simultaneously in an ATP-dependent manner. The protein is DNA gyrase subunit A of Streptomyces coelicolor (strain ATCC BAA-471 / A3(2) / M145).